A 272-amino-acid polypeptide reads, in one-letter code: Putative hydro-lyase RPD_1846 (272 aa).

Belongs to the D-glutamate cyclase family.

The protein is Putative hydro-lyase RPD_1846 of Rhodopseudomonas palustris (strain BisB5).